A 273-amino-acid chain; its full sequence is Glutamate 5-kinase (273 aa).

An ATP-binding site is contributed by Lys-15. Substrate contacts are provided by Ser-55, Asp-142, and Asn-158. ATP contacts are provided by residues 178–179 (SD) and 220–226 (TGGMLSK).

This sequence belongs to the glutamate 5-kinase family.

The protein localises to the cytoplasm. The catalysed reaction is L-glutamate + ATP = L-glutamyl 5-phosphate + ADP. The protein operates within amino-acid biosynthesis; L-proline biosynthesis; L-glutamate 5-semialdehyde from L-glutamate: step 1/2. In terms of biological role, catalyzes the transfer of a phosphate group to glutamate to form L-glutamate 5-phosphate. The sequence is that of Glutamate 5-kinase from Streptococcus pyogenes serotype M1.